The chain runs to 151 residues: MGRMHAPGKGLSQSALPYRRSVPTWLKLTSDDVKEQIFKLAKKGLTPSQIGVILRDSHGVAQVRFVTGNKILRILKSKGLAPDLPEDLYHLIKKAVAVRKHLERNRKDKDAKFRLILIESRIHRLARYYKTKRVLAPNWKYXSSTASALVA.

This sequence belongs to the universal ribosomal protein uS15 family. In terms of assembly, component of the small ribosomal subunit.

It localises to the cytoplasm. Component of the small ribosomal subunit. The ribosome is a large ribonucleoprotein complex responsible for the synthesis of proteins in the cell. The chain is Small ribosomal subunit protein uS15 (rps13) from Gillichthys mirabilis (Long-jawed mudsucker).